Reading from the N-terminus, the 567-residue chain is 2-succinyl-5-enolpyruvyl-6-hydroxy-3-cyclohexene-1-carboxylate synthase (567 aa).

It belongs to the TPP enzyme family. MenD subfamily. Homodimer. Mg(2+) is required as a cofactor. Requires Mn(2+) as cofactor. Thiamine diphosphate serves as cofactor.

It catalyses the reaction isochorismate + 2-oxoglutarate + H(+) = 5-enolpyruvoyl-6-hydroxy-2-succinyl-cyclohex-3-ene-1-carboxylate + CO2. Its pathway is quinol/quinone metabolism; 1,4-dihydroxy-2-naphthoate biosynthesis; 1,4-dihydroxy-2-naphthoate from chorismate: step 2/7. It functions in the pathway quinol/quinone metabolism; menaquinone biosynthesis. Functionally, catalyzes the thiamine diphosphate-dependent decarboxylation of 2-oxoglutarate and the subsequent addition of the resulting succinic semialdehyde-thiamine pyrophosphate anion to isochorismate to yield 2-succinyl-5-enolpyruvyl-6-hydroxy-3-cyclohexene-1-carboxylate (SEPHCHC). This Shewanella loihica (strain ATCC BAA-1088 / PV-4) protein is 2-succinyl-5-enolpyruvyl-6-hydroxy-3-cyclohexene-1-carboxylate synthase.